Reading from the N-terminus, the 1443-residue chain is Lysophospholipase NTE1 (1443 aa).

Residues 1 to 59 (MEEELAIEDLPRLTGTVSLNNGLLHSIYNETTVFKILRWSLVEIPKYILKLMSKNLEIN) lie on the Lumenal side of the membrane. The helical transmembrane segment at 60–80 (LNVSSILIITLLIAAGILVIV) threads the bilayer. Residues 81-1443 (RYKFLTGYSE…RIKMYRRNTM (1363 aa)) are Cytoplasmic-facing. Residues 103 to 118 (ALGQQSTNYPKSTSSG) are compositionally biased toward polar residues. Disordered stretches follow at residues 103-122 (ALGQQSTNYPKSTSSGLFVE) and 199-251 (KYDE…GKMH). Over residues 210–235 (EGEEADEDDEEEEKEVGDDGDDEMDV) the composition is skewed to acidic residues. Residues 619–750 (LYKR…LKSL) and 746–871 (KLKS…VASK) each bind a nucleoside 3',5'-cyclic phosphate. The PNPLA domain occupies 1136-1300 (LVLGGGGSRG…LDNLPVMEMK (165 aa)). The GXGXXG signature appears at 1140–1145 (GGGSRG). Residues 1167–1171 (GTSIG) carry the GXSXG motif. Ser-1169 (nucleophile) is an active-site residue. Residue Asp-1287 is the Proton acceptor of the active site. Positions 1287–1289 (DGG) match the DGA/G motif.

Belongs to the NTE family.

The protein resides in the endoplasmic reticulum membrane. It catalyses the reaction a 1-acyl-sn-glycero-3-phosphocholine + H2O = sn-glycerol 3-phosphocholine + a fatty acid + H(+). Inhibited by organophosphorus esters. Its function is as follows. Intracellular phospholipase B that catalyzes the double deacylation of phosphatidylcholine (PC) to glycerophosphocholine (GroPCho). Plays an important role in membrane lipid homeostasis. Responsible for the rapid PC turnover in response to inositol, elevated temperatures, or when choline is present in the growth medium. The chain is Lysophospholipase NTE1 (NTE1) from Lodderomyces elongisporus (strain ATCC 11503 / CBS 2605 / JCM 1781 / NBRC 1676 / NRRL YB-4239) (Yeast).